The primary structure comprises 329 residues: Malate dehydrogenase (329 aa).

13–19 lines the NAD(+) pocket; sequence GAAGNIS. Positions 94 and 100 each coordinate substrate. NAD(+)-binding positions include asparagine 107, glutamine 114, and 131–133; that span reads VGN. Residues asparagine 133 and arginine 164 each coordinate substrate. Histidine 189 (proton acceptor) is an active-site residue.

The protein belongs to the LDH/MDH superfamily. MDH type 2 family.

The catalysed reaction is (S)-malate + NAD(+) = oxaloacetate + NADH + H(+). Functionally, catalyzes the reversible oxidation of malate to oxaloacetate. This chain is Malate dehydrogenase, found in Psychrobacter arcticus (strain DSM 17307 / VKM B-2377 / 273-4).